Here is a 336-residue protein sequence, read N- to C-terminus: D-erythrose-4-phosphate dehydrogenase (336 aa).

Residue R11 to I12 coordinates NAD(+). Substrate-binding positions include S153–T155, R199, T212–K213, and R235. C154 (nucleophile) is an active-site residue. N317 serves as a coordination point for NAD(+).

The protein belongs to the glyceraldehyde-3-phosphate dehydrogenase family. Epd subfamily. Homotetramer.

It localises to the cytoplasm. The enzyme catalyses D-erythrose 4-phosphate + NAD(+) + H2O = 4-phospho-D-erythronate + NADH + 2 H(+). It participates in cofactor biosynthesis; pyridoxine 5'-phosphate biosynthesis; pyridoxine 5'-phosphate from D-erythrose 4-phosphate: step 1/5. Functionally, catalyzes the NAD-dependent conversion of D-erythrose 4-phosphate to 4-phosphoerythronate. This Aeromonas salmonicida (strain A449) protein is D-erythrose-4-phosphate dehydrogenase.